The chain runs to 254 residues: Phosphoribosylaminoimidazole-succinocarboxamide synthase (254 aa).

Belongs to the SAICAR synthetase family.

The catalysed reaction is 5-amino-1-(5-phospho-D-ribosyl)imidazole-4-carboxylate + L-aspartate + ATP = (2S)-2-[5-amino-1-(5-phospho-beta-D-ribosyl)imidazole-4-carboxamido]succinate + ADP + phosphate + 2 H(+). Its pathway is purine metabolism; IMP biosynthesis via de novo pathway; 5-amino-1-(5-phospho-D-ribosyl)imidazole-4-carboxamide from 5-amino-1-(5-phospho-D-ribosyl)imidazole-4-carboxylate: step 1/2. This is Phosphoribosylaminoimidazole-succinocarboxamide synthase from Gluconacetobacter diazotrophicus (strain ATCC 49037 / DSM 5601 / CCUG 37298 / CIP 103539 / LMG 7603 / PAl5).